We begin with the raw amino-acid sequence, 143 residues long: Hemoglobin subunit alpha-1 (143 aa).

S2 is modified (N-acetylserine). Residues 2 to 143 (SLTEKDKAAV…VSLALAERYR (142 aa)) form the Globin domain. H60 is a binding site for O2. H89 is a heme b binding site.

This sequence belongs to the globin family. As to quaternary structure, hb 1 is a heterotetramer of two alpha-1 and two beta chains. Red blood cells.

Functionally, involved in oxygen transport from gills to the various peripheral tissues. This Cottoperca gobio (Frogmouth) protein is Hemoglobin subunit alpha-1 (hba1).